A 302-amino-acid chain; its full sequence is Deoxyhypusine hydroxylase (302 aa).

6 HEAT-like PBS-type repeats span residues 23 to 49, 54 to 80, 87 to 113, 175 to 201, 206 to 232, and 239 to 265; these read ERFRALFTLKNIGGKTAIDAISKAFDD, LKHELAYCLGQMQDPTALEILTKVLKD, VRHEAAEAMGAIGHADVLAILEEYKKD, DRYRAMFSLRNLCTEESVLAIAEGLKD, FRHEVAFVLGQLQEPCSIPYLQENLED, and VRHECAEALGAIATDDCIQILTRYADD. Residues histidine 56, glutamate 57, histidine 89, and glutamate 90 each coordinate Fe cation. Residues histidine 208, glutamate 209, histidine 241, and glutamate 242 each coordinate Fe cation.

This sequence belongs to the deoxyhypusine hydroxylase family. It depends on Fe(2+) as a cofactor.

Its subcellular location is the endoplasmic reticulum membrane. The catalysed reaction is [eIF5A protein]-deoxyhypusine + AH2 + O2 = [eIF5A protein]-hypusine + A + H2O. It participates in protein modification; eIF5A hypusination. Catalyzes the hydroxylation of the N(6)-(4-aminobutyl)-L-lysine intermediate to form hypusine, an essential post-translational modification only found in mature eIF-5A factor. Essential for organismal viability and plays a role in a wide number of important processes such as cell growth and proliferation, and regulates induction of autophagy and protein synthesis. Has a role in eIF-5A-mediated translational control. The sequence is that of Deoxyhypusine hydroxylase from Drosophila pseudoobscura pseudoobscura (Fruit fly).